Here is a 184-residue protein sequence, read N- to C-terminus: NADH-quinone oxidoreductase subunit B (184 aa).

[4Fe-4S] cluster is bound by residues C37, C38, C103, and C132.

The protein belongs to the complex I 20 kDa subunit family. NDH-1 is composed of 14 different subunits. Subunits NuoB, C, D, E, F, and G constitute the peripheral sector of the complex. [4Fe-4S] cluster serves as cofactor.

It is found in the cell membrane. The catalysed reaction is a quinone + NADH + 5 H(+)(in) = a quinol + NAD(+) + 4 H(+)(out). NDH-1 shuttles electrons from NADH, via FMN and iron-sulfur (Fe-S) centers, to quinones in the respiratory chain. The immediate electron acceptor for the enzyme in this species is believed to be a menaquinone. Couples the redox reaction to proton translocation (for every two electrons transferred, four hydrogen ions are translocated across the cytoplasmic membrane), and thus conserves the redox energy in a proton gradient. This Mycobacterium marinum (strain ATCC BAA-535 / M) protein is NADH-quinone oxidoreductase subunit B.